The sequence spans 59 residues: Large ribosomal subunit protein bL32 (59 aa).

It belongs to the bacterial ribosomal protein bL32 family. As to quaternary structure, part of the 50S ribosomal subunit.

The polypeptide is Large ribosomal subunit protein bL32 (rpmF) (Bacillus subtilis (strain 168)).